Here is a 74-residue protein sequence, read N- to C-terminus: uncharacterized protein (74 aa).

Its subcellular location is the mitochondrion. This is an uncharacterized protein from Marchantia polymorpha (Common liverwort).